Here is a 1255-residue protein sequence, read N- to C-terminus: Mucin-1 (1255 aa).

The first 23 residues, 1–23 (MTPGTQSPFFLLLLLTVLTVVTG), serve as a signal peptide directing secretion. Residues 23–1033 (GSGHASSTPG…PLTSSNHSTS (1011 aa)) are disordered. Residues 24–1158 (SGHASSTPGG…SAQSGAGVPG (1135 aa)) are Extracellular-facing. A compositionally biased stretch (polar residues) spans 38 to 54 (SATQRSSVPSSTEKNAV). Over residues 55-75 (SMTSSVLSSHSPGSGSSTTQG) the composition is skewed to low complexity. A 1; approximate repeat occupies 61 to 80 (LSSHSPGSGSSTTQGQDVTL). The stretch at 81–100 (APATEPASGSAATWGQDVTS) is one 2; approximate repeat. The segment covering 90–102 (SAATWGQDVTSVP) has biased composition (polar residues). 43 consecutive repeat copies span residues 101–120 (VPVT…DVTS), 121–140 (APDN…GVTS), 141–160 (APDT…GVTS), 161–180 (APDT…GVTS), 181–200 (APDT…GVTS), 201–220 (APDT…GVTS), 221–240 (APDT…GVTS), 241–260 (APDT…GVTS), 261–280 (APDT…GVTS), 281–300 (APDT…GVTS), 301–320 (APDT…GVTS), 321–340 (APDT…GVTS), 341–360 (APDT…GVTS), 361–380 (APDT…GVTS), 381–400 (APDT…GVTS), 401–420 (APDT…GVTS), 421–440 (APDT…GVTS), 441–460 (APDT…GVTS), 461–480 (APDT…GVTS), 481–500 (APDT…GVTS), 501–520 (APDT…GVTS), 521–540 (APDT…GVTS), 541–560 (APDT…GVTS), 561–580 (APDT…GVTS), 581–600 (APDT…GVTS), 601–620 (APDT…GVTS), 621–640 (APDT…GVTS), 641–660 (APDT…GVTS), 661–680 (APDT…GVTS), 681–700 (APDT…GVTS), 701–720 (APDT…GVTS), 721–740 (APDT…GVTS), 741–760 (APDT…GVTS), 761–780 (APDT…GVTS), 781–800 (APDT…GVTS), 801–820 (APDT…GVTS), 821–840 (APDT…GVTS), 841–860 (APDT…GVTS), 861–880 (APDT…GVTS), 881–900 (APDT…GVTS), 901–920 (APDT…GVTS), 921–940 (APDT…GVTS), and 941–960 (APDN…NVTS). The 42 X 20 AA approximate tandem repeats of P-A-P-G-S-T-A-P-P-A-H-G-V-T-S-A-P-D-T-R stretch occupies residues 126–965 (PAPGSTAPPA…HNVTSASGSA (840 aa)). O-linked (GalNAc...) threonine glycosylation is found at Thr131 and Thr139. The O-linked (GalNAc...) serine glycan is linked to Ser140. Thr144 is a glycosylation site (O-linked (GalNAc...) threonine). N-linked (GlcNAc...) asparagine glycosylation is present at Asn957. Residues 960–970 (SASGSASGSAS) are compositionally biased toward low complexity. One copy of the 46; approximate repeat lies at 961–980 (ASGSASGSASTLVHNGTSAR). Composition is skewed to polar residues over residues 971-993 (TLVH…TPFS) and 1001-1033 (TPTT…HSTS). Asn975 carries N-linked (GlcNAc...) asparagine glycosylation. Residues 981 to 1000 (ATTTPASKSTPFSIPSHHSD) form a 47; approximate repeat. The stretch at 1001–1020 (TPTTLASHSTKTDASSTHHS) is one 48; approximate repeat. N-linked (GlcNAc...) asparagine glycans are attached at residues Asn1029, Asn1055, and Asn1133. Residues 1039-1148 (GVSFFFLSFH…VSVSDVPFPF (110 aa)) form the SEA domain. Residues 1159–1181 (WGIALLVLVCVLVALAIVYLIAL) form a helical membrane-spanning segment. Over 1182–1255 (AVCQCRRKNY…PAVAATSANL (74 aa)) the chain is Cytoplasmic. S-palmitoyl cysteine attachment occurs at residues Cys1184 and Cys1186. Residues 1192–1228 (GQLDIFPARDTYHPMSEYPTYHTHGRYVPPSSTDRSP) are interaction with P53. Tyr1203 is modified (phosphotyrosine; by PDGFR). The Interaction with GRB2 motif lies at 1203–1206 (YHPM). Tyr1212 is subject to Phosphotyrosine. Residues 1214–1237 (THGRYVPPSSTDRSPYEKVSAGNG) form a disordered region. A Phosphotyrosine; by PDGFR modification is found at Tyr1218. The tract at residues 1223-1230 (STDRSPYE) is required for interaction with GSK3B. Position 1224 is a phosphothreonine; by PKC/PRKCD (Thr1224). A Phosphoserine; by GSK3-beta modification is found at Ser1227. Position 1229 is a phosphotyrosine; by CSK, EGFR and SRC (Tyr1229). An Interaction with SRC and ESR1 motif is present at residues 1229 to 1232 (YEKV). Residues 1233–1241 (SAGNGGSSL) form a required for interaction with beta- and gamma-catenins region. Tyr1243 carries the phosphotyrosine modification. The Required for interaction with AP1S2 motif lies at 1243-1246 (YTNP).

The alpha subunit forms a tight, non-covalent heterodimeric complex with the proteolytically-released beta-subunit. Interaction, via the tandem repeat region, with domain 1 of ICAM1 is implicated in cell migration and metastases. Isoform 1 binds directly the SH2 domain of GRB2, and forms a MUC1/GRB2/SOS1 complex involved in RAS signaling. The cytoplasmic tail (MUC1CT) interacts with several proteins such as SRC, CTNNB1 and ERBs. Interaction with the SH2 domain of CSK decreases interaction with GSK3B. Interacts with CTNNB1/beta-catenin and JUP/gamma-catenin and promotes cell adhesion. Interaction with JUP/gamma-catenin is induced by heregulin. Binds PRKCD, ERBB2, ERBB3 and ERBB4. Heregulin (HRG) stimulates the interaction with ERBB2 and, to a much lesser extent, the interaction with ERBB3 and ERBB4. Interacts with P53 in response to DNA damage. Interacts with KLF4. Interacts with estrogen receptor alpha/ESR1, through its DNA-binding domain, and stimulates its transcription activity. Binds ADAM17. Isoform ZD forms disulfide-linked oligomers. Highly glycosylated (N- and O-linked carbohydrates and sialic acid). O-glycosylated to a varying degree on serine and threonine residues within each tandem repeat, ranging from mono- to penta-glycosylation. The average density ranges from about 50% in human milk to over 90% in T47D breast cancer cells. Further sialylation occurs during recycling. Membrane-shed glycoproteins from kidney and breast cancer cells have preferentially sialyated core 1 structures, while secreted forms from the same tissues display mainly core 2 structures. The O-glycosylated content is overlapping in both these tissues with terminal fucose and galactose, 2- and 3-linked galactose, 3- and 3,6-linked GalNAc-ol and 4-linked GlcNAc predominating. Differentially O-glycosylated in breast carcinomas with 3,4-linked GlcNAc. N-glycosylation consists of high-mannose, acidic complex-type and hybrid glycans in the secreted form MUC1/SEC, and neutral complex-type in the transmembrane form, MUC1/TM. In terms of processing, proteolytic cleavage in the SEA domain occurs in the endoplasmic reticulum by an autoproteolytic mechanism and requires the full-length SEA domain as well as requiring a Ser, Thr or Cys residue at the P + 1 site. Cleavage at this site also occurs on isoform MUC1/X but not on isoform MUC1/Y. Ectodomain shedding is mediated by ADAM17. Post-translationally, dual palmitoylation on cysteine residues in the CQC motif is required for recycling from endosomes back to the plasma membrane. Phosphorylated on tyrosines and serine residues in the C-terminal. Phosphorylation on tyrosines in the C-terminal increases the nuclear location of MUC1 and beta-catenin. Phosphorylation by PKC delta induces binding of MUC1 to beta-catenin/CTNNB1 and thus decreases the formation of the beta-catenin/E-cadherin complex. Src-mediated phosphorylation inhibits interaction with GSK3B. Src- and EGFR-mediated phosphorylation on Tyr-1229 increases binding to beta-catenin/CTNNB1. GSK3B-mediated phosphorylation on Ser-1227 decreases this interaction but restores the formation of the beta-cadherin/E-cadherin complex. On T-cell receptor activation, phosphorylated by LCK. PDGFR-mediated phosphorylation increases nuclear colocalization of MUC1CT and CTNNB1. In terms of processing, the N-terminal sequence has been shown to begin at position 24 or 28. Expressed on the apical surface of epithelial cells, especially of airway passages, breast and uterus. Also expressed in activated and unactivated T-cells. Overexpressed in epithelial tumors, such as breast or ovarian cancer and also in non-epithelial tumor cells. Isoform Y is expressed in tumor cells only.

The protein localises to the apical cell membrane. Its subcellular location is the secreted. The protein resides in the cell membrane. It is found in the cytoplasm. It localises to the nucleus. Its function is as follows. The alpha subunit has cell adhesive properties. Can act both as an adhesion and an anti-adhesion protein. May provide a protective layer on epithelial cells against bacterial and enzyme attack. In terms of biological role, the beta subunit contains a C-terminal domain which is involved in cell signaling, through phosphorylations and protein-protein interactions. Modulates signaling in ERK, SRC and NF-kappa-B pathways. In activated T-cells, influences directly or indirectly the Ras/MAPK pathway. Promotes tumor progression. Regulates TP53-mediated transcription and determines cell fate in the genotoxic stress response. Binds, together with KLF4, the PE21 promoter element of TP53 and represses TP53 activity. The chain is Mucin-1 (MUC1) from Homo sapiens (Human).